A 224-amino-acid chain; its full sequence is METVASTQVQTLIVRRFGLVSYEPVWRAMQDFTQQRDAETTDEVWLLQHEPVFTQGQAGDAEHVLFPGDIPVVQVDRGGQVTYHGPGQLMVYLLLDLRRLKMGARDLVTMIENTLVDTLAGYGIEAHARKDAPGVYVGDAKIASLGLRIRRGSSFHGLALNVDMDLEPFLRINPCGYQGLRMTQIKEFVPDVSWASVADAWLSQFVRAAGFQSVVEQRGLPGDE.

Residues 38 to 213 (AETTDEVWLL…QFVRAAGFQS (176 aa)) form the BPL/LPL catalytic domain. Residues 77–84 (RGGQVTYH), 144–146 (SLG), and 157–159 (GLA) contribute to the substrate site. The active-site Acyl-thioester intermediate is the cysteine 175.

This sequence belongs to the LipB family.

The protein resides in the cytoplasm. The catalysed reaction is octanoyl-[ACP] + L-lysyl-[protein] = N(6)-octanoyl-L-lysyl-[protein] + holo-[ACP] + H(+). It functions in the pathway protein modification; protein lipoylation via endogenous pathway; protein N(6)-(lipoyl)lysine from octanoyl-[acyl-carrier-protein]: step 1/2. Functionally, catalyzes the transfer of endogenously produced octanoic acid from octanoyl-acyl-carrier-protein onto the lipoyl domains of lipoate-dependent enzymes. Lipoyl-ACP can also act as a substrate although octanoyl-ACP is likely to be the physiological substrate. In Hahella chejuensis (strain KCTC 2396), this protein is Octanoyltransferase.